A 469-amino-acid chain; its full sequence is tRNA(Ile)-lysidine synthase (469 aa).

Residue 26–31 (SGGPDS) coordinates ATP.

Belongs to the tRNA(Ile)-lysidine synthase family.

The protein localises to the cytoplasm. The enzyme catalyses cytidine(34) in tRNA(Ile2) + L-lysine + ATP = lysidine(34) in tRNA(Ile2) + AMP + diphosphate + H(+). Ligates lysine onto the cytidine present at position 34 of the AUA codon-specific tRNA(Ile) that contains the anticodon CAU, in an ATP-dependent manner. Cytidine is converted to lysidine, thus changing the amino acid specificity of the tRNA from methionine to isoleucine. This is tRNA(Ile)-lysidine synthase from Shouchella clausii (strain KSM-K16) (Alkalihalobacillus clausii).